The chain runs to 267 residues: Glutamate 5-kinase (267 aa).

Lys14 provides a ligand contact to ATP. 3 residues coordinate substrate: Ser54, Asp141, and Asn157. ATP-binding positions include 177–178 (SD) and 219–225 (TGGMMSK).

Belongs to the glutamate 5-kinase family.

It is found in the cytoplasm. It catalyses the reaction L-glutamate + ATP = L-glutamyl 5-phosphate + ADP. Its pathway is amino-acid biosynthesis; L-proline biosynthesis; L-glutamate 5-semialdehyde from L-glutamate: step 1/2. In terms of biological role, catalyzes the transfer of a phosphate group to glutamate to form L-glutamate 5-phosphate. The polypeptide is Glutamate 5-kinase (Streptococcus thermophilus (strain CNRZ 1066)).